The sequence spans 144 residues: Heme transporter hrg1-B (144 aa).

Transmembrane regions (helical) follow at residues 6–26 (IYISVGYSTFGMLVGFSAFIV), 38–58 (AMGGLSGVLALWALVTHIMYI), 71–91 (FFMFVSSVFSLLAVAAFATFI), and 107–127 (FYLSAVWSFMTLKWAFLLGLY). A Di-leucine motif motif is present at residues 140 to 141 (IL).

Belongs to the HRG family.

It is found in the endosome membrane. The protein resides in the lysosome membrane. The protein localises to the cytoplasmic vesicle. Its subcellular location is the phagosome membrane. It carries out the reaction heme b(in) = heme b(out). Functionally, heme transporter that regulates intracellular heme availability through the endosomal or lysosomal compartment. In macrophages, is the heme transporter for heme-iron recycling. Essential for macrophage iron homeostasis, transports heme from the phagolysosome to the cytoplasm during erythrophagocytosis (EP). In Danio rerio (Zebrafish), this protein is Heme transporter hrg1-B (slc48a1a).